Reading from the N-terminus, the 569-residue chain is Paxillin-B (569 aa).

Positions 10 to 18 match the LD motif 1 motif; that stretch reads DLDLLLADL. Over residues 62–78 the composition is skewed to polar residues; the sequence is QPQTVQTISTPAPKNHN. The disordered stretch occupies residues 62 to 103; it reads QPQTVQTISTPAPKNHNTTTTTASFSVSSQPAPQPPQQSQQI. A compositionally biased stretch (low complexity) spans 79-102; it reads TTTTTASFSVSSQPAPQPPQQSQQ. The short motif at 106-112 is the LD motif 2 element; sequence LDDLDEL. Residues 129–311 form a disordered region; it reads TTPEEHITHA…SPKVVHGDDL (183 aa). Residues 150–161 show a composition bias toward low complexity; it reads NTSSTNSASSLS. 2 stretches are compositionally biased toward polar residues: residues 162–188 and 196–206; these read RPNNNPSVVSTPQPGKVTSTATITTKK and TLETTSGNNVY. Residues 207–217 are compositionally biased toward low complexity; it reads SSQPSQSQPQP. The LD motif 3 signature appears at 232 to 239; it reads LDELLKGL. The segment covering 258–272 has biased composition (basic residues); that stretch reads HQHHHQHQHHHHHNP. Positions 273 to 301 are enriched in low complexity; that stretch reads NHNQTQTVTTQINIGRTNTPNNNNNNNTN. The LD motif 4 signature appears at 311-318; that stretch reads LDNLLNNL. LIM zinc-binding domains follow at residues 334 to 391, 393 to 452, 453 to 510, and 511 to 569; these read GTCG…QELF, ARCA…TFAV, RCGG…QQAG, and SVCS…KLFA.

Belongs to the paxillin family. In terms of tissue distribution, expressed in the upper and lower cup of the fruiting body.

The protein resides in the cytoplasm. Its subcellular location is the cell cortex. The protein localises to the cell projection. It is found in the filopodium. It localises to the cell junction. The protein resides in the focal adhesion. Its subcellular location is the cytoskeleton. Required for cell-substrate adhesion, cell sorting, slug migration, and cell differentiation. May function upstream of limB. In Dictyostelium discoideum (Social amoeba), this protein is Paxillin-B (paxB).